Consider the following 109-residue polypeptide: Iron-sulfur cluster assembly protein CyaY (109 aa).

It belongs to the frataxin family.

In terms of biological role, involved in iron-sulfur (Fe-S) cluster assembly. May act as a regulator of Fe-S biogenesis. This is Iron-sulfur cluster assembly protein CyaY from Burkholderia lata (strain ATCC 17760 / DSM 23089 / LMG 22485 / NCIMB 9086 / R18194 / 383).